The sequence spans 397 residues: Succinate--CoA ligase [ADP-forming] subunit beta (397 aa).

Positions 9-254 (KALLRQYGAP…ETEEDPKELA (246 aa)) constitute an ATP-grasp domain. Residues Lys-46, 53-55 (GRG), Glu-109, Ser-112, and Glu-117 each bind ATP. Mg(2+) contacts are provided by Asn-209 and Asp-223. Substrate is bound by residues Asn-274 and 331–333 (GIM).

Belongs to the succinate/malate CoA ligase beta subunit family. In terms of assembly, heterotetramer of two alpha and two beta subunits. Mg(2+) is required as a cofactor.

The enzyme catalyses succinate + ATP + CoA = succinyl-CoA + ADP + phosphate. It catalyses the reaction GTP + succinate + CoA = succinyl-CoA + GDP + phosphate. It functions in the pathway carbohydrate metabolism; tricarboxylic acid cycle; succinate from succinyl-CoA (ligase route): step 1/1. Its function is as follows. Succinyl-CoA synthetase functions in the citric acid cycle (TCA), coupling the hydrolysis of succinyl-CoA to the synthesis of either ATP or GTP and thus represents the only step of substrate-level phosphorylation in the TCA. The beta subunit provides nucleotide specificity of the enzyme and binds the substrate succinate, while the binding sites for coenzyme A and phosphate are found in the alpha subunit. This is Succinate--CoA ligase [ADP-forming] subunit beta from Paracoccus denitrificans (strain Pd 1222).